Reading from the N-terminus, the 582-residue chain is Bifunctional lycopene cyclase/phytoene synthase (582 aa).

Residues 1-261 (MNQNGTRLCY…VVLGLVGCDY (261 aa)) are lycopene beta-cyclase. 6 helical membrane passes run 34–54 (CTYT…FFTA), 59–79 (KICI…SYLI), 99–121 (IPIE…YCIF), 142–162 (YVVA…LLLG), 170–190 (LILV…YPFL), and 242–262 (ALFF…CDYA). The phytoene synthase stretch occupies residues 268–582 (YESLSQPASD…LLSALVYRLE (315 aa)).

This sequence in the N-terminal section; belongs to the lycopene beta-cyclase family. It in the C-terminal section; belongs to the phytoene/squalene synthase family.

It localises to the membrane. It carries out the reaction all-trans-lycopene = gamma-carotene. The enzyme catalyses gamma-carotene = all-trans-beta-carotene. It catalyses the reaction 2 (2E,6E,10E)-geranylgeranyl diphosphate = 15-cis-phytoene + 2 diphosphate. It functions in the pathway carotenoid biosynthesis; beta-carotene biosynthesis. Its pathway is carotenoid biosynthesis; phytoene biosynthesis; all-trans-phytoene from geranylgeranyl diphosphate: step 1/1. Functionally, bifunctional enzyme that catalyzes the reactions from geranylgeranyl diphosphate to phytoene (phytoene synthase) and lycopene to beta-carotene via the intermediate gamma-carotene (lycopene cyclase). The sequence is that of Bifunctional lycopene cyclase/phytoene synthase from Aspergillus niger (strain ATCC MYA-4892 / CBS 513.88 / FGSC A1513).